A 325-amino-acid polypeptide reads, in one-letter code: Helicase VP6-A (325 aa).

Disordered stretches follow at residues 1–126 and 175–231; these read MLLA…TNGR and GVAE…PARI. Basic and acidic residues-rich tracts occupy residues 8-18, 32-54, 61-79, and 92-105; these read VIKRSSEELKQ, EGGK…KDGE, GQKE…DRRI, and PGER…RGDG. Lys106 is an ATP binding site. Residues 106–122 are compositionally biased toward gly residues; that stretch reads KVGGGGGDADAGVGATG. A compositionally biased stretch (basic and acidic residues) spans 175–229; the sequence is GVAEQTERLRDLRRKEKNGTHAKAVERGGRKQRKESHGDAQREGVEEEKTSEEPA.

The protein belongs to the orbivirus VP6 family. In terms of assembly, homohexamer.

Its subcellular location is the virion. It carries out the reaction ATP + H2O = ADP + phosphate + H(+). Its function is as follows. ATP dependent RNA helicase essential for RNA packaging and viral transcription. Possesses ss- and dsRNA-binding capacity. This Bluetongue virus 11 (isolate USA) (BTV 11) protein is Helicase VP6-A (Segment-9).